The chain runs to 154 residues: 17 kDa surface antigen (154 aa).

The first 19 residues, 1–19 (MKLLSKIMIIALAASMLQA), serve as a signal peptide directing secretion. Residue C20 is the site of N-palmitoyl cysteine attachment. C20 carries the S-diacylglycerol cysteine lipid modification.

Belongs to the rickettsiale 17 kDa surface antigen family.

Its subcellular location is the cell outer membrane. In Rickettsia australis, this protein is 17 kDa surface antigen (omp).